We begin with the raw amino-acid sequence, 198 residues long: uncharacterized protein (198 aa).

The protein localises to the plastid. The protein resides in the chloroplast. This is an uncharacterized protein from Antithamnion sp. (Red alga).